We begin with the raw amino-acid sequence, 349 residues long: Core protein VP7 (349 aa).

A glycan (N-linked (GlcNAc...) asparagine; by host) is linked at Asn287.

It belongs to the orbivirus VP7 family. Homotrimer that assemble in a complex of 260 capsomers on an inner scaffold composed of VP3.

The protein resides in the virion. Its function is as follows. The VP7 protein is one of the five proteins (with VP1, VP3, VP4, and VP6) which form the inner capsid of the virus. This is Core protein VP7 (Segment-7) from Bluetongue virus 1 (isolate Australia) (BTV 1).